A 460-amino-acid polypeptide reads, in one-letter code: A-type ATP synthase subunit B (460 aa).

Belongs to the ATPase alpha/beta chains family. In terms of assembly, has multiple subunits with at least A(3), B(3), C, D, E, F, H, I and proteolipid K(x).

It is found in the cell membrane. Its function is as follows. Component of the A-type ATP synthase that produces ATP from ADP in the presence of a proton gradient across the membrane. The B chain is a regulatory subunit. In Methanosarcina barkeri (strain Fusaro / DSM 804), this protein is A-type ATP synthase subunit B.